The primary structure comprises 181 residues: dCTP deaminase (181 aa).

DCTP-binding positions include 100–105 (RSTFAR) and D116. E126 serves as the catalytic Proton donor/acceptor. 2 residues coordinate dCTP: Y158 and Q165. The interval 160–181 (GKYQGQRGVTPPKLDNSSSKNF) is disordered.

The protein belongs to the dCTP deaminase family. In terms of assembly, homotrimer.

It catalyses the reaction dCTP + H2O + H(+) = dUTP + NH4(+). The protein operates within pyrimidine metabolism; dUMP biosynthesis; dUMP from dCTP (dUTP route): step 1/2. Catalyzes the deamination of dCTP to dUTP. This is dCTP deaminase from Desulfurococcus amylolyticus (strain DSM 18924 / JCM 16383 / VKM B-2413 / 1221n) (Desulfurococcus kamchatkensis).